The chain runs to 376 residues: D-alanine--D-alanine ligase B (376 aa).

Positions Lys155–Ala361 constitute an ATP-grasp domain. Ala184–Ile239 contacts ATP. Mg(2+) is bound by residues Asp316, Glu328, and Asn330.

The protein belongs to the D-alanine--D-alanine ligase family. Requires Mg(2+) as cofactor. The cofactor is Mn(2+).

It is found in the cytoplasm. It catalyses the reaction 2 D-alanine + ATP = D-alanyl-D-alanine + ADP + phosphate + H(+). Its pathway is cell wall biogenesis; peptidoglycan biosynthesis. Functionally, cell wall formation. This chain is D-alanine--D-alanine ligase B, found in Bradyrhizobium diazoefficiens (strain JCM 10833 / BCRC 13528 / IAM 13628 / NBRC 14792 / USDA 110).